Reading from the N-terminus, the 136-residue chain is Transmembrane protein 203 (136 aa).

A run of 4 helical transmembrane segments spans residues 14–34, 50–72, 81–101, and 112–132; these read FAQLEIFLHIWALLVFTVLLA, FIPFFTADGLSTYFTTIVTVRLF, VLRLFWILTILSLKFVFEMLL, and LWFGLIMSPVFILLQLLMIRA.

The protein resides in the endoplasmic reticulum membrane. The protein localises to the endoplasmic reticulum-Golgi intermediate compartment. Functionally, involved in the regulation of cellular calcium homeotasis. May act as a regulator of STING-mediated inflammatory signaling in macrophages. The sequence is that of Transmembrane protein 203 (tmem203) from Xenopus tropicalis (Western clawed frog).